The sequence spans 316 residues: Ribosomal RNA small subunit methyltransferase H (316 aa).

Residues 35–37, D55, F79, D101, and Q108 each bind S-adenosyl-L-methionine; that span reads GGH.

The protein belongs to the methyltransferase superfamily. RsmH family.

Its subcellular location is the cytoplasm. The catalysed reaction is cytidine(1402) in 16S rRNA + S-adenosyl-L-methionine = N(4)-methylcytidine(1402) in 16S rRNA + S-adenosyl-L-homocysteine + H(+). Functionally, specifically methylates the N4 position of cytidine in position 1402 (C1402) of 16S rRNA. The sequence is that of Ribosomal RNA small subunit methyltransferase H from Vibrio proteolyticus (Aeromonas proteolytica).